The primary structure comprises 393 residues: Lipid-A-disaccharide synthase (393 aa).

It belongs to the LpxB family.

The catalysed reaction is a lipid X + a UDP-2-N,3-O-bis[(3R)-3-hydroxyacyl]-alpha-D-glucosamine = a lipid A disaccharide + UDP + H(+). Its pathway is bacterial outer membrane biogenesis; LPS lipid A biosynthesis. Its function is as follows. Condensation of UDP-2,3-diacylglucosamine and 2,3-diacylglucosamine-1-phosphate to form lipid A disaccharide, a precursor of lipid A, a phosphorylated glycolipid that anchors the lipopolysaccharide to the outer membrane of the cell. The sequence is that of Lipid-A-disaccharide synthase from Granulibacter bethesdensis (strain ATCC BAA-1260 / CGDNIH1).